Here is a 224-residue protein sequence, read N- to C-terminus: tRNA (guanine-N(7)-)-methyltransferase (224 aa).

S-adenosyl-L-methionine-binding residues include E52, D77, and D126. D126 is a catalytic residue. Substrate is bound by residues K130 and D162.

It belongs to the class I-like SAM-binding methyltransferase superfamily. TrmB family.

It carries out the reaction guanosine(46) in tRNA + S-adenosyl-L-methionine = N(7)-methylguanosine(46) in tRNA + S-adenosyl-L-homocysteine. The protein operates within tRNA modification; N(7)-methylguanine-tRNA biosynthesis. Functionally, catalyzes the formation of N(7)-methylguanine at position 46 (m7G46) in tRNA. This is tRNA (guanine-N(7)-)-methyltransferase from Christiangramia forsetii (strain DSM 17595 / CGMCC 1.15422 / KT0803) (Gramella forsetii).